The chain runs to 98 residues: NADH-ubiquinone oxidoreductase chain 4L (98 aa).

The next 3 membrane-spanning stretches (helical) occupy residues 1-21 (MSPV…GLAF), 26-46 (LLSA…AIAL), and 61-81 (MILL…LVAA).

Belongs to the complex I subunit 4L family.

Its subcellular location is the mitochondrion membrane. It catalyses the reaction a ubiquinone + NADH + 5 H(+)(in) = a ubiquinol + NAD(+) + 4 H(+)(out). In terms of biological role, core subunit of the mitochondrial membrane respiratory chain NADH dehydrogenase (Complex I) which catalyzes electron transfer from NADH through the respiratory chain, using ubiquinone as an electron acceptor. Part of the enzyme membrane arm which is embedded in the lipid bilayer and involved in proton translocation. The polypeptide is NADH-ubiquinone oxidoreductase chain 4L (MT-ND4L) (Squalus acanthias (Spiny dogfish)).